A 231-amino-acid chain; its full sequence is GrpE protein homolog, mitochondrial (231 aa).

Positions 49 to 71 (SEKAGEKAEEKAEEQNLSAEEQK) are disordered.

Belongs to the GrpE family. As to quaternary structure, component of the PAM complex, at least composed of mtHsp70, MGE1, TIM44, PAM16, PAM17 and PAM18.

The protein localises to the mitochondrion matrix. Its function is as follows. Essential component of the PAM complex, a complex required for the translocation of transit peptide-containing proteins from the inner membrane into the mitochondrial matrix in an ATP-dependent manner. Seems to control the nucleotide-dependent binding of SSC1 to substrate proteins. In Candida glabrata (strain ATCC 2001 / BCRC 20586 / JCM 3761 / NBRC 0622 / NRRL Y-65 / CBS 138) (Yeast), this protein is GrpE protein homolog, mitochondrial (mge1).